Here is a 172-residue protein sequence, read N- to C-terminus: Translation initiation factor IF-3 (172 aa).

The protein belongs to the IF-3 family. Monomer.

Its subcellular location is the cytoplasm. Its function is as follows. IF-3 binds to the 30S ribosomal subunit and shifts the equilibrium between 70S ribosomes and their 50S and 30S subunits in favor of the free subunits, thus enhancing the availability of 30S subunits on which protein synthesis initiation begins. The chain is Translation initiation factor IF-3 from Geobacter metallireducens (strain ATCC 53774 / DSM 7210 / GS-15).